The following is a 547-amino-acid chain: Probable bifunctional tRNA threonylcarbamoyladenosine biosynthesis protein (547 aa).

Positions 1-329 (MGNSNELICI…FRTDMVDVNW (329 aa)) are kae1. 3 residues coordinate Fe cation: H112, H116, and Y133. L-threonylcarbamoyladenylate contacts are provided by residues 133 to 137 (YVSGG), D165, G178, E182, and N262. D290 is a Fe cation binding site. Residues 346 to 547 (QIPRHLIGKG…KEVEKRGRYL (202 aa)) enclose the Protein kinase domain. ATP contacts are provided by residues 352–360 (IGKGAEADI) and K373. Catalysis depends on D465, which acts as the Proton acceptor; for kinase activity.

This sequence in the N-terminal section; belongs to the KAE1 / TsaD family. In the C-terminal section; belongs to the protein kinase superfamily. Tyr protein kinase family. BUD32 subfamily. In terms of assembly, component of the KEOPS complex that consists of Kae1, Bud32, Cgi121 and Pcc1; the whole complex dimerizes. Fe(2+) is required as a cofactor.

It is found in the cytoplasm. The catalysed reaction is L-seryl-[protein] + ATP = O-phospho-L-seryl-[protein] + ADP + H(+). It carries out the reaction L-threonyl-[protein] + ATP = O-phospho-L-threonyl-[protein] + ADP + H(+). It catalyses the reaction L-threonylcarbamoyladenylate + adenosine(37) in tRNA = N(6)-L-threonylcarbamoyladenosine(37) in tRNA + AMP + H(+). Required for the formation of a threonylcarbamoyl group on adenosine at position 37 (t(6)A37) in tRNAs that read codons beginning with adenine. Is a component of the KEOPS complex that is probably involved in the transfer of the threonylcarbamoyl moiety of threonylcarbamoyl-AMP (TC-AMP) to the N6 group of A37. The Kae1 domain likely plays a direct catalytic role in this reaction. The Bud32 domain probably displays kinase activity that regulates Kae1 function. This chain is Probable bifunctional tRNA threonylcarbamoyladenosine biosynthesis protein, found in Methanococcus vannielii (strain ATCC 35089 / DSM 1224 / JCM 13029 / OCM 148 / SB).